The sequence spans 753 residues: 5-methyltetrahydropteroyltriglutamate--homocysteine methyltransferase (753 aa).

5-methyltetrahydropteroyltri-L-glutamate is bound by residues 17 to 20 (RELK) and K117. L-homocysteine contacts are provided by residues 431–433 (IGS) and E484. Residues 431–433 (IGS) and E484 contribute to the L-methionine site. 5-methyltetrahydropteroyltri-L-glutamate contacts are provided by residues 515–516 (RC) and W561. An L-homocysteine-binding site is contributed by D599. D599 is an L-methionine binding site. A 5-methyltetrahydropteroyltri-L-glutamate-binding site is contributed by E605. Zn(2+) is bound by residues H641, C643, and E665. H694 acts as the Proton donor in catalysis. C726 is a Zn(2+) binding site.

Belongs to the vitamin-B12 independent methionine synthase family. Zn(2+) serves as cofactor.

The catalysed reaction is 5-methyltetrahydropteroyltri-L-glutamate + L-homocysteine = tetrahydropteroyltri-L-glutamate + L-methionine. It functions in the pathway amino-acid biosynthesis; L-methionine biosynthesis via de novo pathway; L-methionine from L-homocysteine (MetE route): step 1/1. Its function is as follows. Catalyzes the transfer of a methyl group from 5-methyltetrahydrofolate to homocysteine resulting in methionine formation. The protein is 5-methyltetrahydropteroyltriglutamate--homocysteine methyltransferase of Cronobacter sakazakii (strain ATCC BAA-894) (Enterobacter sakazakii).